A 366-amino-acid polypeptide reads, in one-letter code: Tripartite motif-containing protein 54 (366 aa).

An RING-type zinc finger spans residues 26-82 (CPICLEMFSKPVVILPCQHNLCRKCANDVFQASNPLWQSRSSTTVSSGGRFRCPSCR). Residues 121-163 (EQHLMCEEHEDEKINIYCLSCEVPTCSLCKVFGAHKDCEVAPL) form a B box-type zinc finger. 4 residues coordinate Zn(2+): Cys-126, His-129, Cys-149, and His-155. The mediates microtubule-binding and homooligomerization stretch occupies residues 168–211 (KRQKSELSDGIAMLVAGNDRVQAVITQMEEVCQTIEENSRRQKQ). Positions 185–258 (NDRVQAVITQ…LIRQYGDHLE (74 aa)) form a coiled coil. Residues 271–329 (MEEPQMALYLQQAKELINKVGTMSKVELAGRPEPGYERMDQFTVSVEHVAEMLRTIDFQ) form the COS domain. A disordered region spans residues 326-366 (IDFQPGTSGEEEDEEVAVEGEEGNAGPEEERTDGRESTGQH). The span at 334–347 (GEEEDEEVAVEGEE) shows a compositional bias: acidic residues. Basic and acidic residues predominate over residues 353–366 (EEERTDGRESTGQH).

In terms of assembly, homooligomer and heterooligomer. Interacts with TRIM63 and probably with TRIM55. Interacts with tubulin.

The protein resides in the cytoplasm. It is found in the cytoskeleton. The protein localises to the myofibril. It localises to the sarcomere. Its subcellular location is the z line. In terms of biological role, may bind and stabilize microtubules during myotubes formation. This Bos taurus (Bovine) protein is Tripartite motif-containing protein 54 (TRIM54).